Consider the following 600-residue polypeptide: UvrABC system protein C (600 aa).

The region spanning D15–V92 is the GIY-YIG domain. A UVR domain is found at A197–T232.

Belongs to the UvrC family. Interacts with UvrB in an incision complex.

It is found in the cytoplasm. In terms of biological role, the UvrABC repair system catalyzes the recognition and processing of DNA lesions. UvrC both incises the 5' and 3' sides of the lesion. The N-terminal half is responsible for the 3' incision and the C-terminal half is responsible for the 5' incision. The protein is UvrABC system protein C of Lactobacillus johnsonii (strain CNCM I-12250 / La1 / NCC 533).